An 887-amino-acid polypeptide reads, in one-letter code: MAEFSSNDIDPIETEDWIQAIKSVIREDGLERANFIINTVKKYVPYKNKVVFKKCAISNYVNTIPVEEEPNYPGDLFIEQKIRSVIRWNAIMMVLRASKKNLDLGGHLSSFQSAATIYEVCFNHFFHATNENNGGDLVYFQGHISPGIYSRAFIEDRLTQKQLDNFRQEIDGIGLSSYPHPKLMPNFWQFPTVSMGLGPICAIYQAKFLKYLEHRNLKCTNNQKVYAFLGDGEMDEPESKGAISIAAREKLDNLIFIVNCNLQRLDGPVIGNGKVIDELESVFKGCGWKVIKVIWGSKWDSLLKKDVSGKLIKLMNETLDGDYQTFKSKNGAYIRKYFFGKYLETQELVKDMSDDQIWNLDRGGHDPKKIYAALSKANSIVGKPVIILMHTVKGYGMGDIAEGKNIAHQIKKIDIKGITYIKNRFKVPVEENELKYLPYVSFDANSIEYKYLHARRKKLGGYLPIRLSNFTNFFTLPKLDEFSTLLTEQKKEISTTIVFIRILNILLRNSFIKDRIVPIIADEARTFGMEGLFRKIGIYNFIGQKYTPQDKELLAYYKEDKKGQILQEGINELGAAASWLAAATSYSTNNFPMIPFYIFYSMFGFQRIGDLFWAAGDQQARGFLIGGTSGKTTLNGEGLQHGDGHSHIQALTIPNCISYNPAYAYELAVIVHDGLQRMYGPSQENIYYYITTMNENYVMPGISKNMYEGICKGIYKLKHVGKKNVKVQIMGSGSILQCVCRAAEILLEEYDIGSDVYSVTSFTELARNGQDCDRWNLLHPTQEKKVPFVTKIMNKLPAIAVTDYMKLFSEQVRAYIPAVTYRVLGTDGFGRSDSRKNLRRYFEIDEYHIVIAVLGELEKIGDVDKNTIVNAISKFKIDINKVNPRLA.

Homodimer. Part of the PDH complex, consisting of multiple copies of pyruvate dehydrogenase (E1), dihydrolipoamide acetyltransferase (E2) and lipoamide dehydrogenase (E3). Requires thiamine diphosphate as cofactor.

The catalysed reaction is N(6)-[(R)-lipoyl]-L-lysyl-[protein] + pyruvate + H(+) = N(6)-[(R)-S(8)-acetyldihydrolipoyl]-L-lysyl-[protein] + CO2. Component of the pyruvate dehydrogenase (PDH) complex, that catalyzes the overall conversion of pyruvate to acetyl-CoA and CO(2). This chain is Pyruvate dehydrogenase E1 component (aceE), found in Buchnera aphidicola subsp. Baizongia pistaciae (strain Bp).